The sequence spans 156 residues: ATP synthase subunit b', chloroplastic (156 aa).

The helical transmembrane segment at 24 to 44 (ATLPLVAIQFILLMVTLNIIL) threads the bilayer.

Belongs to the ATPase B chain family. F-type ATPases have 2 components, F(1) - the catalytic core - and F(0) - the membrane proton channel. F(1) has five subunits: alpha(3), beta(3), gamma(1), delta(1), epsilon(1). F(0) has four main subunits: a(1), b(1), b'(1) and c(10-14). The alpha and beta chains form an alternating ring which encloses part of the gamma chain. F(1) is attached to F(0) by a central stalk formed by the gamma and epsilon chains, while a peripheral stalk is formed by the delta, b and b' chains.

The protein resides in the plastid. Its subcellular location is the chloroplast thylakoid membrane. Its function is as follows. F(1)F(0) ATP synthase produces ATP from ADP in the presence of a proton or sodium gradient. F-type ATPases consist of two structural domains, F(1) containing the extramembraneous catalytic core and F(0) containing the membrane proton channel, linked together by a central stalk and a peripheral stalk. During catalysis, ATP synthesis in the catalytic domain of F(1) is coupled via a rotary mechanism of the central stalk subunits to proton translocation. Component of the F(0) channel, it forms part of the peripheral stalk, linking F(1) to F(0). The b'-subunit is a diverged and duplicated form of b found in plants and photosynthetic bacteria. The protein is ATP synthase subunit b', chloroplastic of Thalassiosira pseudonana (Marine diatom).